The following is a 466-amino-acid chain: Gamma-glutamylpolyamine synthetase GlnA3 (466 aa).

Residues 127 to 466 enclose the GS catalytic domain; that stretch reads GRTVLRRIVA…GVAAAYRWKY (340 aa). Mg(2+)-binding residues include Glu-151 and Glu-153. ATP is bound at residue Glu-202. Glu-207 and Glu-214 together coordinate Mg(2+). Gly-259 is an L-glutamate binding site. His-263 provides a ligand contact to Mg(2+). Ser-267 contacts ATP. L-glutamate is bound by residues Arg-316 and Arg-334. Arg-334 and Arg-339 together coordinate ATP. Residue Glu-355 coordinates Mg(2+).

This sequence belongs to the glutamine synthetase family. The cofactor is Mg(2+). As to expression, expressed in mycelium.

The enzyme catalyses spermine + L-glutamate + ATP = gamma-L-glutamylspermine + ADP + phosphate + H(+). It catalyses the reaction spermidine + L-glutamate + ATP = gamma-L-glutamylspermidine + ADP + phosphate + H(+). It carries out the reaction putrescine + L-glutamate + ATP = gamma-L-glutamylputrescine + ADP + phosphate + H(+). The catalysed reaction is cadaverine + L-glutamate + ATP = gamma-L-glutamylcadaverine + ADP + phosphate + H(+). Its pathway is amine and polyamine degradation; putrescine degradation. The protein operates within amine and polyamine degradation; spermidine degradation. It functions in the pathway amine and polyamine degradation; spermine degradation. Its function is as follows. Involved in the catabolism of polyamines. Catalyzes the ATP-dependent gamma-glutamylation of polyamines. Substrates include putrescine, cadaverine, spermidine and spermine, with a preference for long-chain polyamines spermidine and spermine. Is not able to compensate for the loss of glutamine synthetases (GSs). No complementation of the L-glutamine auxotrophy of an E.coli glnA mutant. Involved in morphological differentiation and in the production of secondary metabolites. Together with GlnA2, enables survival of S.coelicolor under exposure to high local environmental polyamine concentrations, which is toxic to the cells. In Streptomyces coelicolor (strain ATCC BAA-471 / A3(2) / M145), this protein is Gamma-glutamylpolyamine synthetase GlnA3.